We begin with the raw amino-acid sequence, 1026 residues long: Multidrug resistance protein MdtC (1026 aa).

The next 11 membrane-spanning stretches (helical) occupy residues 15–35 (ILIAAAITLCGILGFRLLPVA), 333–353 (EVEETLAISVALVILVVFLFL), 360–380 (LIPAVAVPVSLIGTFAAMYLC), 387–407 (LSLMALTIATGFVVDDAIVVL), 431–451 (VGFTVISMSLSLVAVFLPLLL), 463–483 (FAVTLSVAIGISLVVSLTLTP), 528–548 (LVGVVFLGTVALNIWLYIAIP), 853–873 (LILIVAAIATVYIVLEILYES), 897–917 (LFNAPFSLIALIGIMLLIGIV), 953–973 (PIMMTTLAALFGALPLVLSGG), and 984–1004 (ITIVGGLVMSQLLTLYTTPVV).

The protein belongs to the resistance-nodulation-cell division (RND) (TC 2.A.6) family. MdtC subfamily. As to quaternary structure, part of a tripartite efflux system composed of MdtA, MdtB and MdtC. MdtC forms a heteromultimer with MdtB.

Its subcellular location is the cell inner membrane. This is Multidrug resistance protein MdtC from Salmonella paratyphi A (strain AKU_12601).